Consider the following 364-residue polypeptide: Coproporphyrin III ferrochelatase (364 aa).

2 residues coordinate Fe-coproporphyrin III: Arg29 and Tyr118. Residues His169 and Glu250 each contribute to the Fe(2+) site.

This sequence belongs to the ferrochelatase family.

Its subcellular location is the cytoplasm. It carries out the reaction Fe-coproporphyrin III + 2 H(+) = coproporphyrin III + Fe(2+). It functions in the pathway porphyrin-containing compound metabolism; protoheme biosynthesis. Involved in coproporphyrin-dependent heme b biosynthesis. Catalyzes the insertion of ferrous iron into coproporphyrin III to form Fe-coproporphyrin III. The polypeptide is Coproporphyrin III ferrochelatase (Streptococcus pneumoniae (strain 70585)).